Here is a 1401-residue protein sequence, read N- to C-terminus: Uveal autoantigen with coiled-coil domains and ankyrin repeats protein (1401 aa).

ANK repeat units lie at residues Leu-25–Val-53, Glu-54–Thr-83, Ala-87–His-116, Gln-120–Ala-149, Asp-153–Ser-182, and Gln-186–Leu-215. Phosphoserine is present on Ser-265. Coiled-coil stretches lie at residues Thr-273–Lys-361, Glu-423–Tyr-827, and Ala-856–Ile-1368. Lys-1020 participates in a covalent cross-link: Glycyl lysine isopeptide (Lys-Gly) (interchain with G-Cter in SUMO2).

In terms of assembly, component of the apoptosome complex, composed of APAF1, pro-caspase-9 and UACA. In the complex, it probably interacts directly with APAF1. Interacts with LGALS3. Interacts with ARF6 and ACTB. Interacts with RAB39A. Highly expressed in muscle and heart, moderately in liver, kidney and pancreas, and weakly in placenta and lung.

The protein localises to the nucleus. Its subcellular location is the cytoplasm. The protein resides in the cytoskeleton. Regulates APAF1 expression and plays an important role in the regulation of stress-induced apoptosis. Promotes apoptosis by regulating three pathways, apoptosome up-regulation, LGALS3/galectin-3 down-regulation and NF-kappa-B inactivation. Regulates the redistribution of APAF1 into the nucleus after proapoptotic stress. Down-regulates the expression of LGALS3 by inhibiting NFKB1. Functionally, modulates isoactin dynamics to regulate the morphological alterations required for cell growth and motility. Interaction with ARF6 may modulate cell shape and motility after injury. May be involved in multiple neurite formation. The chain is Uveal autoantigen with coiled-coil domains and ankyrin repeats protein (UACA) from Bos taurus (Bovine).